The following is a 330-amino-acid chain: RNA polymerase sigma factor RpoS (330 aa).

Residues 56-89 are sigma-70 factor domain-1; it reads DATQLYLGEIGYSPLLTAEEEVYFARRALRGDVA. The interval 94–164 is sigma-70 factor domain-2; sequence MIESNLRLVV…ERAIMNQTRT (71 aa). The Interaction with polymerase core subunit RpoC signature appears at 118–121; it reads DLIE. The interval 174 to 249 is sigma-70 factor domain-3; the sequence is ELNVYLRTAR…DEKENGPEDT (76 aa). The interval 262–315 is sigma-70 factor domain-4; it reads WLFELNAKQREVLARRFGLLGYEAATLEDVGREIGLTRERVRQIQVEGLRRLRE. A DNA-binding region (H-T-H motif) is located at residues 288–307; the sequence is LEDVGREIGLTRERVRQIQV.

This sequence belongs to the sigma-70 factor family. RpoS subfamily. As to quaternary structure, interacts with the RNA polymerase core enzyme and RssB.

The protein localises to the cytoplasm. Sigma factors are initiation factors that promote the attachment of RNA polymerase to specific initiation sites and are then released. This sigma factor is the master transcriptional regulator of the stationary phase and the general stress response. Controls, positively or negatively, the expression of several hundred genes, which are mainly involved in metabolism, transport, regulation and stress management. In terms of biological role, protects stationary phase cells from killing induced by endoribonuclease MazF. The protein is RNA polymerase sigma factor RpoS of Escherichia coli (strain K12).